The sequence spans 973 residues: ATP-dependent DNA helicase Q5 (973 aa).

Positions 39 to 213 constitute a Helicase ATP-binding domain; the sequence is MAVVKGDKDV…FAALHLKQPV (175 aa). ATP is bound at residue 52–59; it reads MPTGAGKS. The DEAH box motif lies at 157–160; sequence DEAH. A Helicase C-terminal domain is found at 241–398; that stretch reads NLRDFCLKAL…NKPSDKATLL (158 aa). Residues Cys412, Cys428, Cys432, and Cys435 each contribute to the Zn(2+) site. A phosphoserine mark is found at Ser489 and Ser492. The interaction with POLR2A stretch occupies residues 491–621; sequence GSGDEGRDEA…ASKDGQLYDM (131 aa). Disordered regions lie at residues 518–538, 679–795, and 822–884; these read GKEA…LRDA, TEKL…VPGK, and CSLE…AREP. Thr527 is modified (phosphothreonine). The interval 653–726 is interaction with RAD51; it reads PKRVGAGFSK…APGSRTNCGD (74 aa). Ser728 carries the phosphoserine; by CDK1 modification. Basic and acidic residues predominate over residues 840-856; the sequence is TQAEKRPRPQQESQEKR. The span at 863 to 878 shows a compositional bias: polar residues; the sequence is PSTNSSALASDPSTEN.

It belongs to the helicase family. RecQ subfamily. As to quaternary structure, monomer. Interacts with TOP2A, TOP3A and TOP3B. Interacts with RNA polymerase II subunit POLR2A. Identified in a complex with the RNA polymerase II core bound to DNA. Interacts with RAD51. Interacts with WRN; this interaction stimulates WRN helicase activity on DNA fork duplexes. Interacts with MUS1; this interaction promotes MUS81-dependent mitotic DNA synthesis. Zn(2+) is required as a cofactor. Phosphorylated by CDK1 at Ser-728; this phosphorylation is required for RECQL5-mediated disruption of RAD51 filaments on stalled replication forks.

Its subcellular location is the nucleus. It is found in the nucleoplasm. The enzyme catalyses Couples ATP hydrolysis with the unwinding of duplex DNA by translocating in the 3'-5' direction.. It carries out the reaction ATP + H2O = ADP + phosphate + H(+). Its function is as follows. DNA helicase that plays an important role in DNA replication, transcription and repair. Binds to the RNA polymerase II subunit POLR2A during transcription elongation and suppresses transcription-associated genomic instability. Also associates with POLR1A and enforces the stability of ribosomal DNA arrays. Plays an important role in mitotic chromosome separation after cross-over events and cell cycle progress. Mechanistically, removes RAD51 filaments protecting stalled replication forks at common fragile sites and stimulates MUS81-EME1 endonuclease leading to mitotic DNA synthesis. Required for efficient DNA repair, including repair of inter-strand cross-links. Stimulates DNA decatenation mediated by TOP2A. Prevents sister chromatid exchange and homologous recombination. The protein is ATP-dependent DNA helicase Q5 (Recql5) of Rattus norvegicus (Rat).